Consider the following 773-residue polypeptide: DNA polymerase (773 aa).

The tract at residues 1–131 (MILDADYITE…IDRGLIPMEG (131 aa)) is N-terminal domain. The interval 133-385 (EELRMLAFDI…ELARRTESYA (253 aa)) is exonuclease domain. Mg(2+) is bound by residues Asp141, Glu143, and Asp315. The tract at residues 390-773 (KEPEKGLWEN…GLGAWLKPKT (384 aa)) is polymerase domain. 2 cysteine pairs are disulfide-bonded: Cys428/Cys442 and Cys506/Cys509.

This sequence belongs to the DNA polymerase type-B family. It depends on Mg(2+) as a cofactor.

It catalyses the reaction DNA(n) + a 2'-deoxyribonucleoside 5'-triphosphate = DNA(n+1) + diphosphate. Its activity is regulated as follows. DNA polymerase activity strongly inhibited by uracil-containing oligonucleotides. Its function is as follows. Thermostable DNA polymerase. In addition to polymerase activity, this DNA polymerase exhibits 3' to 5' exonuclease activity. This chain is DNA polymerase (pol), found in Desulfurococcus sp. (strain Tok).